A 633-amino-acid polypeptide reads, in one-letter code: Replication protein E1 (633 aa).

The short motif at 84–86 (KRK) is the Nuclear localization signal element. S90, S94, and S108 each carry phosphoserine; by host. The Nuclear export signal motif lies at 107-116 (LSPRLGAISL). The interval 148–168 (NTEGTDETETDQVQTVSGETT) is disordered. Residues 158–168 (DQVQTVSGETT) are compositionally biased toward polar residues. Residues 169 to 335 (TDSLGRQQIT…QTVIEYSLAD (167 aa)) form a DNA-binding region region. An SF3 helicase domain is found at 434–584 (VDFISFMIAL…FPFDSNGNPV (151 aa)). 460-467 (GPPDTGKS) is an ATP binding site. A Glycyl lysine isopeptide (Lys-Gly) (interchain with G-Cter in SUMO) cross-link involves residue K541. The interval 609 to 633 (DNEEEENGDPSNTFRCVPGKASRPI) is disordered.

The protein belongs to the papillomaviridae E1 protein family. In terms of assembly, can form hexamers. Interacts with E2 protein; this interaction increases E1 DNA binding specificity. Interacts with host DNA polymerase subunit POLA2. Interacts with host single stranded DNA-binding protein RPA1. Interacts with host TOP1; this interaction stimulates the enzymatic activity of TOP1. Post-translationally, phosphorylated. Sumoylated.

The protein localises to the host nucleus. It carries out the reaction Couples ATP hydrolysis with the unwinding of duplex DNA by translocating in the 3'-5' direction.. The enzyme catalyses ATP + H2O = ADP + phosphate + H(+). Its function is as follows. ATP-dependent DNA 3'-5' helicase required for initiation of viral DNA replication. It forms a complex with the viral E2 protein. The E1-E2 complex binds to the replication origin which contains binding sites for both proteins. During the initial step, a dimer of E1 interacts with a dimer of protein E2 leading to a complex that binds the viral origin of replication with high specificity. Then, a second dimer of E1 displaces the E2 dimer in an ATP-dependent manner to form the E1 tetramer. Following this, two E1 monomers are added to each half of the site, which results in the formation of two E1 trimers on the viral ori. Subsequently, two hexamers will be created. The double hexamer acts as a bi-directional helicase machinery and unwinds the viral DNA and then recruits the host DNA polymerase to start replication. This is Replication protein E1 from Homo sapiens (Human).